The sequence spans 420 residues: Vacuolar amino acid transporter 5 (420 aa).

The Cytoplasmic segment spans residues 1–19 (MSGYSPLSSGPADVHIGKA). Residues 20–40 (GFFSSVINLANTILGAGILSL) form a helical membrane-spanning segment. The Vacuolar portion of the chain corresponds to 41–49 (PNAFTKTGL). The chain crosses the membrane as a helical span at residues 50–70 (LFGCLTIVFSAFASFLGLYFV). At 71-96 (SQCAARLPRGKASFAAVAKHTFPSLA) the chain is on the cytoplasmic side. A helical membrane pass occupies residues 97 to 117 (VVFDASIAVKCFGVAVSYLVI). At 118-141 (VGDLMPQIAPSLGLSSPMFLRRQT) the chain is on the vacuolar side. A helical transmembrane segment spans residues 142–162 (WIVFALFVLTPLSFLKRLDSL). Topologically, residues 163–166 (RHTS) are cytoplasmic. Residues 167–187 (VISLIALCYLVFIVLYHFIIG) form a helical membrane-spanning segment. Residues 188–195 (DTVKGEIR) are Vacuolar-facing. The chain crosses the membrane as a helical span at residues 196–216 (YFVPESGFGYLSVLPVFVFGF). At 217-240 (TCHQNAFSVINEVRNFSQGFVNFT) the chain is on the cytoplasmic side. A helical membrane pass occupies residues 241–261 (MFTAIISSTLLYLLVAITGYL). Topologically, residues 262-278 (SFGSLASGNIIAMYDNT) are vacuolar. A helical membrane pass occupies residues 279–299 (SIWIIGGKLAIVVLVLFSYPL). Over 300–326 (QCHPCRNSVYQAIRRSYSAHDMSDGYH) the chain is Cytoplasmic. Residues 327-347 (AVITLCILLFTHSLALLLSSL) traverse the membrane as a helical segment. Residues 348-349 (EM) lie on the Vacuolar side of the membrane. Residues 350 to 370 (VLAFVGSTGSTFISFILPGSL) form a helical membrane-spanning segment. Topologically, residues 371–394 (YYFFSHKVASPGNSSPLQLRISRA) are cytoplasmic. The helical transmembrane segment at 395–415 (FAAGLAIYGTVVMILCLNINI) threads the bilayer. Residues 416-420 (AKLSH) lie on the Vacuolar side of the membrane.

It belongs to the amino acid/polyamine transporter 2 family.

The protein localises to the vacuole membrane. Its function is as follows. Vacuolar amino acid transporter involved in the vacuolar uptake of histidine, glutamate, tyrosine, arginine, lysine, and serine. Required for sporulation. The protein is Vacuolar amino acid transporter 5 (avt5) of Schizosaccharomyces pombe (strain 972 / ATCC 24843) (Fission yeast).